A 377-amino-acid chain; its full sequence is Mitogen-activated protein kinase HOG1 (377 aa).

In terms of domain architecture, Protein kinase spans 23-305 (YTELNPVGMG…AVEGLTHPYM (283 aa)). ATP-binding positions include 29–37 (VGMGAFGLV) and Lys52. Asp144 acts as the Proton acceptor in catalysis. A Phosphothreonine modification is found at Thr174. A TXY motif is present at residues 174-176 (TGY). Tyr176 carries the phosphotyrosine modification. The disordered stretch occupies residues 354 to 377 (NETEGSEQPDSQVEQNNLDSANGA). Positions 359–377 (SEQPDSQVEQNNLDSANGA) are enriched in polar residues.

Belongs to the protein kinase superfamily. Ser/Thr protein kinase family. MAP kinase subfamily. HOG1 sub-subfamily. Mg(2+) serves as cofactor. Post-translationally, dually phosphorylated on Thr-174 and Tyr-176, which activates the enzyme. Phosphorylated in response to oxidative and salt stress.

Its subcellular location is the cytoplasm. It localises to the nucleus. It carries out the reaction L-seryl-[protein] + ATP = O-phospho-L-seryl-[protein] + ADP + H(+). The enzyme catalyses L-threonyl-[protein] + ATP = O-phospho-L-threonyl-[protein] + ADP + H(+). With respect to regulation, activated by tyrosine and threonine phosphorylation. Its function is as follows. Proline-directed serine/threonine-protein kinase involved in a signal transduction pathway that is activated by changes in the osmolarity of the extracellular environment. Controls osmotic regulation of transcription of target genes. Regulates stress-induced production and accumulation of glycerol and D-arabitol. HOG1 is also involved in virulence, morphogenesis and oxidative stress response especially through its role in chlamydospore formation, an oxygen-dependent morphogenetic program. The chain is Mitogen-activated protein kinase HOG1 (HOG1) from Candida albicans (strain SC5314 / ATCC MYA-2876) (Yeast).